The following is a 122-amino-acid chain: uncharacterized protein (122 aa).

Polar residues predominate over residues 79–90 (NERVTSRVTNSR). Positions 79 to 122 (NERVTSRVTNSRTESESNGNGNATGNTSSNANSNGNANGIYIRK) are disordered. The segment covering 94-122 (ESNGNGNATGNTSSNANSNGNANGIYIRK) has biased composition (low complexity).

This is an uncharacterized protein from Leptolyngbya boryana (Plectonema boryanum).